Consider the following 138-residue polypeptide: MAEKMKLEIVTPYSKVLDELVDEVTATGKMGEFGVLPGHAPFLTSLNIGELCYKKDGQAVSMALNWGYFEVQDDKIIVLVETAERSDEIDLERAKAALGRAEDALKKLTPEDKQFKVYEAALERALIRMQVAGKAARK.

The protein belongs to the ATPase epsilon chain family. In terms of assembly, F-type ATPases have 2 components, CF(1) - the catalytic core - and CF(0) - the membrane proton channel. CF(1) has five subunits: alpha(3), beta(3), gamma(1), delta(1), epsilon(1). CF(0) has three main subunits: a, b and c.

It localises to the cell inner membrane. Its function is as follows. Produces ATP from ADP in the presence of a proton gradient across the membrane. The sequence is that of ATP synthase epsilon chain from Trichlorobacter lovleyi (strain ATCC BAA-1151 / DSM 17278 / SZ) (Geobacter lovleyi).